We begin with the raw amino-acid sequence, 514 residues long: Type-2 serine--tRNA ligase (514 aa).

Ala-313 is a binding site for L-serine. Residue Cys-315 participates in Zn(2+) binding. Position 344 (Arg-344) interacts with L-serine. Residues 344-346 (RWE) and 355-356 (RV) contribute to the ATP site. An L-serine-binding site is contributed by 361 to 363 (RGE). Zn(2+)-binding residues include Glu-363 and Cys-470. Residue Arg-477 participates in ATP binding.

The protein belongs to the class-II aminoacyl-tRNA synthetase family. Type-2 seryl-tRNA synthetase subfamily. In terms of assembly, homodimer. Zn(2+) is required as a cofactor.

Its subcellular location is the cytoplasm. It carries out the reaction tRNA(Ser) + L-serine + ATP = L-seryl-tRNA(Ser) + AMP + diphosphate + H(+). It catalyses the reaction tRNA(Sec) + L-serine + ATP = L-seryl-tRNA(Sec) + AMP + diphosphate + H(+). It functions in the pathway aminoacyl-tRNA biosynthesis; selenocysteinyl-tRNA(Sec) biosynthesis; L-seryl-tRNA(Sec) from L-serine and tRNA(Sec): step 1/1. Its function is as follows. Catalyzes the attachment of serine to tRNA(Ser). Is also able to aminoacylate tRNA(Sec) with serine, to form the misacylated tRNA L-seryl-tRNA(Sec), which will be further converted into selenocysteinyl-tRNA(Sec). In Methanococcus maripaludis (strain C5 / ATCC BAA-1333), this protein is Type-2 serine--tRNA ligase.